The sequence spans 82 residues: Sec-independent protein translocase protein TatA (82 aa).

The helical transmembrane segment at 2–22 threads the bilayer; it reads GFGGISLWQLLIVLAIIVLLF. The interval 43–82 is disordered; sequence KAMSDEKNTDKEKPEQIQKSEESAPLDSAHTEKNKDNNKV. Basic and acidic residues-rich tracts occupy residues 44 to 64 and 71 to 82; these read AMSD…KSEE and AHTEKNKDNNKV.

The protein belongs to the TatA/E family. As to quaternary structure, the Tat system comprises two distinct complexes: a TatABC complex, containing multiple copies of TatA, TatB and TatC subunits, and a separate TatA complex, containing only TatA subunits. Substrates initially bind to the TatABC complex, which probably triggers association of the separate TatA complex to form the active translocon.

Its subcellular location is the cell inner membrane. Functionally, part of the twin-arginine translocation (Tat) system that transports large folded proteins containing a characteristic twin-arginine motif in their signal peptide across membranes. TatA could form the protein-conducting channel of the Tat system. This Pseudoalteromonas translucida (strain TAC 125) protein is Sec-independent protein translocase protein TatA.